The sequence spans 630 residues: WD repeat-containing protein 26 homolog (630 aa).

Low complexity predominate over residues 1 to 13 (MQSTSSTSSGSCS). Residues 1-90 (MQSTSSTSSG…NNRENTSCSG (90 aa)) are disordered. Phosphoserine is present on residues S36 and S40. Composition is skewed to polar residues over residues 48 to 57 (PSGSSAATNG) and 66 to 75 (IVNNNGSSSR). The LisH domain occupies 96–128 (SNQEIIRLIGQYLHDVGLDKSVQTLMLESGCYL). Residues 129-190 (EHPSATKFRE…EHLDDGNPLD (62 aa)) enclose the CTLH domain. WD repeat units follow at residues 312–351 (DHCDEVWFCKFSPDGLKLATGSKDSTVIIWDVDPYKLTLK), 359–400 (QAQL…LVVK), 404–443 (SLEDSLACGAFSRDGARFVCGGQKGQLYLCDLNGTIVDSW), 445–482 (GVRVNSIAFRADNKTILAADNHYRIRGYNFDSPRSDFD), 485–524 (REPHPIMTFSINSADRLALLNVSNQGLHLWDIEDKCLVRR), 529–569 (RQSN…PLAK), and 572–612 (GHTK…SSAT). The segment at 604–630 (PKPNGSSATTESDDCSSSSSSSSWNMT) is disordered. Low complexity predominate over residues 609-630 (SSATTESDDCSSSSSSSSWNMT).

The protein resides in the cytoplasm. Its subcellular location is the mitochondrion. Functionally, G-beta-like protein involved in cell signal transduction. This is WD repeat-containing protein 26 homolog from Drosophila melanogaster (Fruit fly).